Consider the following 351-residue polypeptide: Protein pelota homolog (351 aa).

This sequence belongs to the eukaryotic release factor 1 family. Pelota subfamily. As to quaternary structure, monomer. Requires a divalent metal cation as cofactor.

It is found in the cytoplasm. May function in recognizing stalled ribosomes, interact with stem-loop structures in stalled mRNA molecules, and effect endonucleolytic cleavage of the mRNA. May play a role in the release non-functional ribosomes and degradation of damaged mRNAs. Has endoribonuclease activity. In Methanosphaera stadtmanae (strain ATCC 43021 / DSM 3091 / JCM 11832 / MCB-3), this protein is Protein pelota homolog.